Here is a 361-residue protein sequence, read N- to C-terminus: 3-dehydroquinate synthase (361 aa).

NAD(+) is bound by residues 104 to 108 (GVIGD), 128 to 129 (TT), K140, and K149. Positions 182, 245, and 262 each coordinate Zn(2+).

Belongs to the sugar phosphate cyclases superfamily. Dehydroquinate synthase family. It depends on NAD(+) as a cofactor. Co(2+) is required as a cofactor. The cofactor is Zn(2+).

It localises to the cytoplasm. It catalyses the reaction 7-phospho-2-dehydro-3-deoxy-D-arabino-heptonate = 3-dehydroquinate + phosphate. Its pathway is metabolic intermediate biosynthesis; chorismate biosynthesis; chorismate from D-erythrose 4-phosphate and phosphoenolpyruvate: step 2/7. Functionally, catalyzes the conversion of 3-deoxy-D-arabino-heptulosonate 7-phosphate (DAHP) to dehydroquinate (DHQ). This chain is 3-dehydroquinate synthase, found in Halalkalibacterium halodurans (strain ATCC BAA-125 / DSM 18197 / FERM 7344 / JCM 9153 / C-125) (Bacillus halodurans).